Here is an 835-residue protein sequence, read N- to C-terminus: MAASAAAATAAASAATAASAASGSPGSGEGSAGGEKRPAASSAAAASASASSPAGGGGEAQELLEHCGVCRERLRPERDPRLLPCLHSACSACLGPATPAAANNSGDGGSAGDGAMVDCPVCKQQCYSKDIVENYFMRDSGSKASSDSQDANQCCTSCEDNAPATSYCVECSEPLCETCVEAHQRVKYTKDHTVRSTGPAKTRDGERTVYCNVHKHEPLVLFCESCDTLTCRDCQLNAHKDHQYQFLEDAVRNQRKLLASLVKRLGDKHATLQKNTKEVRSSIRQVSDVQKRVQVDVKMAILQIMKELNKRGRVLVNDAQKVTEGQQERLERQHWTMTKIQKHQEHILRFASWALESDNNTALLLSKKLIYFQLHRALKMIVDPVEPHGEMKFQWDLNAWTKSAEAFGKIVAERPGTNSTGPGPMAPPRAPGPLSKQGSGSSQPMEVQEGYGFGTDDPYSSAEPHVSGMKRSRSGEGEVSGLMRKVPRVSLERLDLDLTSDSQPPVFKVFPGSTTEDYNLIVIERGAAAAAAGQAGTVPPGAPGAPPLPGMAIVKEEETEAAIGAPPAAPEGPETKPVLMALTEGPGAEGPRLASPSGSTSSGLEVVAPEVTSAPVSGPGILDDSATICRVCQKPGDLVMCNQCEFCFHLDCHLPSLQDVPGEEWSCSLCHVLPDLKEEDGSLSLDGADSTGVVAKLSPANQRKCERVLLALFCHEPCRPLHQLATDSTFSMEQPGGTLDLTLIRARLQEKLSPPYSSPQEFAQDVGRMFKQFNKLTEDKADVQSIIGLQRFFETRMNDAFGDTKFSAVLVEPPPLNLPSAGLSSQELSGPGDGP.

The span at 14 to 24 shows a compositional bias: low complexity; it reads AATAASAASGS. A disordered region spans residues 14–57; it reads AATAASAASGSPGSGEGSAGGEKRPAASSAAAASASASSPAGGG. A phosphoserine mark is found at serine 24, serine 27, and serine 31. A Glycyl lysine isopeptide (Lys-Gly) (interchain with G-Cter in SUMO2) cross-link involves residue lysine 36. The span at 39-53 shows a compositional bias: low complexity; it reads AASSAAAASASASSP. A Phosphoserine modification is found at serine 52. The segment at 67–123 adopts an RING-type zinc-finger fold; it reads CGVCRERLRPERDPRLLPCLHSACSACLGPATPAAANNSGDGGSAGDGAMVDCPVCK. Lysine 129 is covalently cross-linked (Glycyl lysine isopeptide (Lys-Gly) (interchain with G-Cter in SUMO2)). A Phosphoserine modification is found at serine 140. The B box-type 1; atypical zinc-finger motif lies at 150–197; it reads DANQCCTSCEDNAPATSYCVECSEPLCETCVEAHQRVKYTKDHTVRST. Residues cysteine 155, cysteine 158, cysteine 179, and histidine 183 each contribute to the Zn(2+) site. Residue lysine 201 forms a Glycyl lysine isopeptide (Lys-Gly) (interchain with G-Cter in SUMO2) linkage. A B box-type 2 zinc finger spans residues 206 to 247; sequence ERTVYCNVHKHEPLVLFCESCDTLTCRDCQLNAHKDHQYQFL. Positions 211, 214, 234, and 239 each coordinate Zn(2+). The interval 248–378 is leucine zipper alpha helical coiled-coil region; that stretch reads EDAVRNQRKL…LIYFQLHRAL (131 aa). The segment at 249–378 is interaction with MAGEC2; it reads DAVRNQRKLL…LIYFQLHRAL (130 aa). Residues lysine 256 and lysine 263 each participate in a glycyl lysine isopeptide (Lys-Gly) (interchain with G-Cter in SUMO2) cross-link. Residue lysine 268 is modified to N6-acetyllysine. Lysine 274 participates in a covalent cross-link: Glycyl lysine isopeptide (Lys-Gly) (interchain with G-Cter in SUMO2). Residue lysine 306 is modified to N6-acetyllysine; alternate. Lysine 306 is covalently cross-linked (Glycyl lysine isopeptide (Lys-Gly) (interchain with G-Cter in SUMO2); alternate). Lysine 321 is covalently cross-linked (Glycyl lysine isopeptide (Lys-Gly) (interchain with G-Cter in SUMO2)). Lysine 342 bears the N6-acetyllysine mark. Lysine 368 is covalently cross-linked (Glycyl lysine isopeptide (Lys-Gly) (interchain with G-Cter in SUMO2)). The tract at residues 368–372 is involved in binding PPP1CA; it reads KLIYF. N6-acetyllysine; alternate is present on lysine 379. Lysine 379 is covalently cross-linked (Glycyl lysine isopeptide (Lys-Gly) (interchain with G-Cter in SUMO2); alternate). Lysine 379 participates in a covalent cross-link: Glycyl lysine isopeptide (Lys-Gly) (interchain with G-Cter in SUMO1); alternate. Lysine 409 is covalently cross-linked (Glycyl lysine isopeptide (Lys-Gly) (interchain with G-Cter in SUMO2)). A disordered region spans residues 413-481; that stretch reads ERPGTNSTGP…SRSGEGEVSG (69 aa). Serine 419 carries the post-translational modification Phosphoserine. Residue lysine 436 forms a Glycyl lysine isopeptide (Lys-Gly) (interchain with G-Cter in SUMO2) linkage. Residues 436 to 445 show a composition bias toward polar residues; that stretch reads KQGSGSSQPM. A phosphoserine mark is found at serine 439 and serine 441. Lysine 470 participates in a covalent cross-link: Glycyl lysine isopeptide (Lys-Gly) (interchain with G-Cter in SUMO2); alternate. A Glycyl lysine isopeptide (Lys-Gly) (interchain with G-Cter in SUMO1); alternate cross-link involves residue lysine 470. A Citrulline modification is found at arginine 471. A Phosphoserine modification is found at serine 472. Arginine 473 is subject to Citrulline. Phosphoserine occurs at positions 474, 480, and 490. An HP1 box region spans residues 477-514; that stretch reads GEVSGLMRKVPRVSLERLDLDLTSDSQPPVFKVFPGST. Residues 482–495 carry the PxVxL motif motif; that stretch reads LMRKVPRVSLERLD. Threonine 499 carries the phosphothreonine modification. A Phosphoserine modification is found at serine 502. A Glycyl lysine isopeptide (Lys-Gly) (interchain with G-Cter in SUMO2) cross-link involves residue lysine 508. A Glycyl lysine isopeptide (Lys-Gly) (interchain with G-Cter in SUMO2); alternate cross-link involves residue lysine 555. Residue lysine 555 forms a Glycyl lysine isopeptide (Lys-Gly) (interchain with G-Cter in SUMO); alternate linkage. A Glycyl lysine isopeptide (Lys-Gly) (interchain with G-Cter in SUMO2) cross-link involves residue lysine 576. Serine 595 carries the post-translational modification Phosphoserine. A PHD-type zinc finger spans residues 626 to 673; that stretch reads ATICRVCQKPGDLVMCNQCEFCFHLDCHLPSLQDVPGEEWSCSLCHVL. Residue lysine 677 forms a Glycyl lysine isopeptide (Lys-Gly) (interchain with G-Cter in SUMO) linkage. A phosphoserine mark is found at serine 684, serine 690, and serine 698. The Bromo domain maps to 696–800; it reads KLSPANQRKC…RFFETRMNDA (105 aa). Lysine 751 participates in a covalent cross-link: Glycyl lysine isopeptide (Lys-Gly) (interchain with G-Cter in SUMO2); alternate. Lysine 751 is covalently cross-linked (Glycyl lysine isopeptide (Lys-Gly) (interchain with G-Cter in SUMO1); alternate). A Glycyl lysine isopeptide (Lys-Gly) (interchain with G-Cter in SUMO); alternate cross-link involves residue lysine 751. Serine 753 carries the phosphoserine modification. Tyrosine 756 bears the Phosphotyrosine mark. At serine 758 the chain carries Phosphoserine. An N6-acetyllysine; alternate mark is found at lysine 771, lysine 775, and lysine 780. Residues lysine 771, lysine 775, and lysine 780 each participate in a glycyl lysine isopeptide (Lys-Gly) (interchain with G-Cter in SUMO2); alternate cross-link. Residue lysine 780 forms a Glycyl lysine isopeptide (Lys-Gly) (interchain with G-Cter in SUMO1); alternate linkage. Residue serine 785 is modified to Phosphoserine. Lysine 805 participates in a covalent cross-link: Glycyl lysine isopeptide (Lys-Gly) (interchain with G-Cter in SUMO2). The residue at position 825 (serine 825) is a Phosphoserine; by ATM and ATR and dsDNA kinase.

This sequence belongs to the TRIM/RBCC family. Interacts with ZNF382. Interacts with SETX. Oligomer; the RBCC domain homotrimerizes and interacts with one molecule of KRAB to form the KRAB-KAP1 corepressor complex. Binding to a KRAB domain is an absolute requirement for silencing gene expression. Interacts with CEBPB and NR3C1. Interacts with a number of KRAB-ZFP proteins including ZNF10, ZFP53, ZFP68 and ZNF256. Interacts with NCOR1, NR3C1 and CHD3. Interacts with CEBPB (via the RING-type and PHD-type zinc fingers). Component of a ternary complex that includes TRIM28, a HP1 protein (CBX1, CBX3 OR CBX5), a KRAB domain-containing protein, and DNA. Interacts with CBX5 (via the PxVxL motif); the interaction occurs in interphase nuclei and competes for binding POGZ. Interacts with POGZ; the interaction competes for interaction with CBX5. Interacts with SETDB1; the interaction is enhanced by KAP1 sumoylation, stimulates SETDB1 histone methyltransferase activity and gene silencing. Interacts (via the PHD-type zinc finger) with UBE2I; the interaction is required for sumoylation and repressor activity. Component of the TRIM28/KAP1-ERBB4-MDM2 complex involved in connecting growth factor and DNA damage responses. Interacts directly with ERBB4; the interaction represses ERBB4-mediated transcription activity. Interacts with MDM2; the interaction contributes to p53/TP53 inactivation. Component of the TRIM28/KAP1-MDM2-p53/TP53; involved in regulating p53/TP53 stabilization and activity. Interacts (via the leucine zipper alpha helical coiled-coil) with E2F1 (central region); the interaction inhibits E2F1 acetylation and transcriptional activity. Interacts with PPP1CA; the interaction dephosphorylates TRIM28 at Ser-824 and forms a complex at the p21 promoter site. Interacts with PPP1CB; the interaction is weak but is increased on dephosphorylation at Ser-824. Interacts with SMARCAD1. Interacts with, and sumoylates IRF7. Interacts with MAGEC2. Part of a complex composed of TRIM28, HDAC1, HDAC2 and EHMT2. Interacts with AICDA. The large PER complex involved in the histone methylation is composed of at least PER2, CBX3, TRIM28, SUV39H1 and/or SUV39H2; CBX3 mediates the formation of the complex. Interacts with NR4A3; the interactions potentiates NR4A3 activity on NurRE promoter. Interacts (unphosphorylated or phosphorylated form) with ZBTB1 (via BTB domain). Probably part of a corepressor complex containing ZNF304, TRIM28, SETDB1 and DNMT1. Interacts with ATRX. Forms a complex with ATRX, SETDB1 and ZNF274. Interacts with ZFP568; the interaction mediates ZFP568 transcriptional repression activity. Interacts with RRP1B. Interacts with CRY1. Interacts with ZNF263; recruited to the SIX3 promoter along with other proteins involved in chromatin modification and transcriptional corepression where it contributes to transcriptional repression. Interacts with CYREN (via XLF motif). Interacts with TRIM17; this interaction prevents TRIM28 activity. Interacts with ZNF746. Interacts with PHF13. Interacts with ZNF354C. Interacts with ZNF432; the interaction is independent of PARP1. ATM-induced phosphorylation on Ser-825 represses sumoylation leading to the de-repression of expression of a subset of genes involved in cell cycle control and apoptosis in response to genotoxic stress. Dephosphorylation by the phosphatases, PPP1CA and PP1CB forms, allows sumoylation and expression of TRIM28 target genes. Post-translationally, sumoylation/desumoylation events regulate TRIM28-mediated transcriptional repression. Sumoylation is required for interaction with CHD3 and SETDB1 and the corepressor activity. Represses and is repressed by Ser-824 phosphorylation. Enhances the TRIM28 corepressor activity, inhibiting transcriptional activity of a number of genes including GADD45A and CDKN1A/p21. Lys-555, Lys-780 and Lys-805 are the major sites of sumoylation. In response to Dox-induced DNA damage, enhanced phosphorylation on Ser-825 prevents sumoylation and allows de-repression of CDKN1A/p21. In terms of processing, auto-ubiquitinated; enhanced by MAGEA2 and MAGEC2. Citrullinated by PADI4. Post-translationally, ADP-ribosylated by SIRT6, promoting TRIM28/KAP1 interaction with CBX5, thereby contributing to the packaging of LINE-1 retrotransposon elements into transcriptionally repressive heterochromatin.

Its subcellular location is the nucleus. The catalysed reaction is S-ubiquitinyl-[E2 ubiquitin-conjugating enzyme]-L-cysteine + [acceptor protein]-L-lysine = [E2 ubiquitin-conjugating enzyme]-L-cysteine + N(6)-ubiquitinyl-[acceptor protein]-L-lysine.. It functions in the pathway protein modification; protein sumoylation. Its function is as follows. Nuclear corepressor for KRAB domain-containing zinc finger proteins (KRAB-ZFPs). Mediates gene silencing by recruiting CHD3, a subunit of the nucleosome remodeling and deacetylation (NuRD) complex, and SETDB1 (which specifically methylates histone H3 at 'Lys-9' (H3K9me)) to the promoter regions of KRAB target genes. Enhances transcriptional repression by coordinating the increase in H3K9me, the decrease in histone H3 'Lys-9 and 'Lys-14' acetylation (H3K9ac and H3K14ac, respectively) and the disposition of HP1 proteins to silence gene expression. Recruitment of SETDB1 induces heterochromatinization. May play a role as a coactivator for CEBPB and NR3C1 in the transcriptional activation of ORM1. Also a corepressor for ERBB4. Inhibits E2F1 activity by stimulating E2F1-HDAC1 complex formation and inhibiting E2F1 acetylation. May serve as a partial backup to prevent E2F1-mediated apoptosis in the absence of RB1. Important regulator of CDKN1A/p21(CIP1). Has E3 SUMO-protein ligase activity toward itself via its PHD-type zinc finger. Also specifically sumoylates IRF7, thereby inhibiting its transactivation activity. Ubiquitinates p53/TP53 leading to its proteasomal degradation; the function is enhanced by MAGEC2 and MAGEA2, and possibly MAGEA3 and MAGEA6. Mediates the nuclear localization of KOX1, ZNF268 and ZNF300 transcription factors. In association with isoform 2 of ZFP90, is required for the transcriptional repressor activity of FOXP3 and the suppressive function of regulatory T-cells (Treg). Probably forms a corepressor complex required for activated KRAS-mediated promoter hypermethylation and transcriptional silencing of tumor suppressor genes (TSGs) or other tumor-related genes in colorectal cancer (CRC) cells. Required to maintain a transcriptionally repressive state of genes in undifferentiated embryonic stem cells (ESCs). In ESCs, in collaboration with SETDB1, is also required for H3K9me3 and silencing of endogenous and introduced retroviruses in a DNA-methylation independent-pathway. Associates at promoter regions of tumor suppressor genes (TSGs) leading to their gene silencing. The SETDB1-TRIM28-ZNF274 complex may play a role in recruiting ATRX to the 3'-exons of zinc finger genes with atypical chromatin signatures to establish or maintain/protect H3K9me3 at these transcriptionally active regions. The sequence is that of Transcription intermediary factor 1-beta from Rattus norvegicus (Rat).